The following is a 20-amino-acid chain: Neurotoxin BmK 18(2) (20 aa).

One can recognise an LCN-type CS-alpha/beta domain in the interval 2-20 (RDAYIAEDYDCVYHCARDA).

This sequence belongs to the long (4 C-C) scorpion toxin superfamily. Sodium channel inhibitor family. Alpha subfamily. As to expression, expressed by the venom gland.

It localises to the secreted. Binds to sodium channels (Nav) and inhibits the inactivation of the activated channels, thereby blocking neuronal transmission. This Olivierus martensii (Manchurian scorpion) protein is Neurotoxin BmK 18(2).